Here is a 471-residue protein sequence, read N- to C-terminus: ATP synthase subunit beta (471 aa).

An ATP-binding site is contributed by 154 to 161 (GGAGVGKT).

The protein belongs to the ATPase alpha/beta chains family. F-type ATPases have 2 components, CF(1) - the catalytic core - and CF(0) - the membrane proton channel. CF(1) has five subunits: alpha(3), beta(3), gamma(1), delta(1), epsilon(1). CF(0) has three main subunits: a(1), b(2) and c(9-12). The alpha and beta chains form an alternating ring which encloses part of the gamma chain. CF(1) is attached to CF(0) by a central stalk formed by the gamma and epsilon chains, while a peripheral stalk is formed by the delta and b chains.

Its subcellular location is the cell membrane. It carries out the reaction ATP + H2O + 4 H(+)(in) = ADP + phosphate + 5 H(+)(out). Its function is as follows. Produces ATP from ADP in the presence of a proton gradient across the membrane. The catalytic sites are hosted primarily by the beta subunits. This Mesomycoplasma hyopneumoniae (strain J / ATCC 25934 / NCTC 10110) (Mycoplasma hyopneumoniae) protein is ATP synthase subunit beta.